We begin with the raw amino-acid sequence, 192 residues long: Probable nicotinate-nucleotide adenylyltransferase (192 aa).

The protein belongs to the NadD family.

The enzyme catalyses nicotinate beta-D-ribonucleotide + ATP + H(+) = deamido-NAD(+) + diphosphate. It functions in the pathway cofactor biosynthesis; NAD(+) biosynthesis; deamido-NAD(+) from nicotinate D-ribonucleotide: step 1/1. Catalyzes the reversible adenylation of nicotinate mononucleotide (NaMN) to nicotinic acid adenine dinucleotide (NaAD). The sequence is that of Probable nicotinate-nucleotide adenylyltransferase from Cereibacter sphaeroides (strain ATCC 17029 / ATH 2.4.9) (Rhodobacter sphaeroides).